Here is a 548-residue protein sequence, read N- to C-terminus: Eukaryotic translation initiation factor 3 subunit D (548 aa).

Lys-53 bears the N6-acetyllysine mark. A Phosphoserine modification is found at Ser-161. The segment at 285–299 (DFDLPTVSETANEPP) is RNA gate. Disordered regions lie at residues 288-309 (LPTV…FNSP) and 523-548 (PDGT…EEET). The segment covering 291–309 (VSETANEPPQDEGNSFNSP) has biased composition (polar residues). Phosphoserine occurs at positions 528 and 529. Positions 529–548 (SDEDEEEEEEEEEEEEEEET) are enriched in acidic residues.

The protein belongs to the eIF-3 subunit D family. In terms of assembly, component of the eukaryotic translation initiation factor 3 (eIF-3) complex, which is composed of 13 subunits: EIF3A, EIF3B, EIF3C, EIF3D, EIF3E, EIF3F, EIF3G, EIF3H, EIF3I, EIF3J, EIF3K, EIF3L and EIF3M. The eIF-3 complex appears to include 3 stable modules: module A is composed of EIF3A, EIF3B, EIF3G and EIF3I; module B is composed of EIF3F, EIF3H, and EIF3M; and module C is composed of EIF3C, EIF3D, EIF3E, EIF3K and EIF3L. EIF3C of module C binds EIF3B of module A and EIF3H of module B, thereby linking the three modules. EIF3J is a labile subunit that binds to the eIF-3 complex via EIF3B. The eIF-3 complex interacts with RPS6KB1 under conditions of nutrient depletion. Mitogenic stimulation leads to binding and activation of a complex composed of MTOR and RPTOR, leading to phosphorylation and release of RPS6KB1 and binding of EIF4B to eIF-3.

The protein resides in the cytoplasm. In terms of biological role, mRNA cap-binding component of the eukaryotic translation initiation factor 3 (eIF-3) complex, a complex required for several steps in the initiation of protein synthesis of a specialized repertoire of mRNAs. The eIF-3 complex associates with the 40S ribosome and facilitates the recruitment of eIF-1, eIF-1A, eIF-2:GTP:methionyl-tRNAi and eIF-5 to form the 43S pre-initiation complex (43S PIC). The eIF-3 complex stimulates mRNA recruitment to the 43S PIC and scanning of the mRNA for AUG recognition. The eIF-3 complex is also required for disassembly and recycling of post-termination ribosomal complexes and subsequently prevents premature joining of the 40S and 60S ribosomal subunits prior to initiation. The eIF-3 complex specifically targets and initiates translation of a subset of mRNAs involved in cell proliferation, including cell cycling, differentiation and apoptosis, and uses different modes of RNA stem-loop binding to exert either translational activation or repression. In the eIF-3 complex, EIF3D specifically recognizes and binds the 7-methylguanosine cap of a subset of mRNAs. The protein is Eukaryotic translation initiation factor 3 subunit D of Pongo abelii (Sumatran orangutan).